The sequence spans 188 residues: Elongation factor P (188 aa).

Position 34 is an N6-(3,6-diaminohexanoyl)-5-hydroxylysine (Lys-34).

This sequence belongs to the elongation factor P family. Post-translationally, may be beta-lysylated on the epsilon-amino group of Lys-34 by the combined action of EpmA and EpmB, and then hydroxylated on the C5 position of the same residue by EpmC (if this protein is present). Lysylation is critical for the stimulatory effect of EF-P on peptide-bond formation. The lysylation moiety may extend toward the peptidyltransferase center and stabilize the terminal 3-CCA end of the tRNA. Hydroxylation of the C5 position on Lys-34 may allow additional potential stabilizing hydrogen-bond interactions with the P-tRNA.

Its subcellular location is the cytoplasm. Its pathway is protein biosynthesis; polypeptide chain elongation. Functionally, involved in peptide bond synthesis. Alleviates ribosome stalling that occurs when 3 or more consecutive Pro residues or the sequence PPG is present in a protein, possibly by augmenting the peptidyl transferase activity of the ribosome. Modification of Lys-34 is required for alleviation. The protein is Elongation factor P of Actinobacillus pleuropneumoniae serotype 5b (strain L20).